The chain runs to 241 residues: tRNA pseudouridine synthase A (241 aa).

Asp52 serves as the catalytic Nucleophile. Residue Tyr111 participates in substrate binding.

Belongs to the tRNA pseudouridine synthase TruA family. In terms of assembly, homodimer.

The catalysed reaction is uridine(38/39/40) in tRNA = pseudouridine(38/39/40) in tRNA. Formation of pseudouridine at positions 38, 39 and 40 in the anticodon stem and loop of transfer RNAs. This chain is tRNA pseudouridine synthase A, found in Ureaplasma parvum serovar 3 (strain ATCC 27815 / 27 / NCTC 11736).